A 338-amino-acid polypeptide reads, in one-letter code: Holliday junction branch migration complex subunit RuvB (338 aa).

The interval Met-1–Ile-22 is disordered. Residues Ala-4–Tyr-187 are large ATPase domain (RuvB-L). ATP contacts are provided by residues Arg-27, Gly-68, Lys-71, Thr-72, Thr-73, Glu-134–Tyr-136, Arg-177, Tyr-187, and Arg-224. Thr-72 contributes to the Mg(2+) binding site. Residues Asn-188 to Asp-258 form a small ATPAse domain (RuvB-S) region. Residues Ser-261–Lys-338 form a head domain (RuvB-H) region. Arg-297, Arg-316, and Arg-321 together coordinate DNA.

The protein belongs to the RuvB family. Homohexamer. Forms an RuvA(8)-RuvB(12)-Holliday junction (HJ) complex. HJ DNA is sandwiched between 2 RuvA tetramers; dsDNA enters through RuvA and exits via RuvB. An RuvB hexamer assembles on each DNA strand where it exits the tetramer. Each RuvB hexamer is contacted by two RuvA subunits (via domain III) on 2 adjacent RuvB subunits; this complex drives branch migration. In the full resolvosome a probable DNA-RuvA(4)-RuvB(12)-RuvC(2) complex forms which resolves the HJ.

It localises to the cytoplasm. It catalyses the reaction ATP + H2O = ADP + phosphate + H(+). Functionally, the RuvA-RuvB-RuvC complex processes Holliday junction (HJ) DNA during genetic recombination and DNA repair, while the RuvA-RuvB complex plays an important role in the rescue of blocked DNA replication forks via replication fork reversal (RFR). RuvA specifically binds to HJ cruciform DNA, conferring on it an open structure. The RuvB hexamer acts as an ATP-dependent pump, pulling dsDNA into and through the RuvAB complex. RuvB forms 2 homohexamers on either side of HJ DNA bound by 1 or 2 RuvA tetramers; 4 subunits per hexamer contact DNA at a time. Coordinated motions by a converter formed by DNA-disengaged RuvB subunits stimulates ATP hydrolysis and nucleotide exchange. Immobilization of the converter enables RuvB to convert the ATP-contained energy into a lever motion, pulling 2 nucleotides of DNA out of the RuvA tetramer per ATP hydrolyzed, thus driving DNA branch migration. The RuvB motors rotate together with the DNA substrate, which together with the progressing nucleotide cycle form the mechanistic basis for DNA recombination by continuous HJ branch migration. Branch migration allows RuvC to scan DNA until it finds its consensus sequence, where it cleaves and resolves cruciform DNA. This chain is Holliday junction branch migration complex subunit RuvB, found in Shewanella sediminis (strain HAW-EB3).